Here is a 246-residue protein sequence, read N- to C-terminus: Biosynthetic peptidoglycan transglycosylase (246 aa).

Residues 20–42 form a helical membrane-spanning segment; the sequence is SLRWVLAAPLLFAAASVLQVLAL.

The protein belongs to the glycosyltransferase 51 family.

Its subcellular location is the cell inner membrane. The enzyme catalyses [GlcNAc-(1-&gt;4)-Mur2Ac(oyl-L-Ala-gamma-D-Glu-L-Lys-D-Ala-D-Ala)](n)-di-trans,octa-cis-undecaprenyl diphosphate + beta-D-GlcNAc-(1-&gt;4)-Mur2Ac(oyl-L-Ala-gamma-D-Glu-L-Lys-D-Ala-D-Ala)-di-trans,octa-cis-undecaprenyl diphosphate = [GlcNAc-(1-&gt;4)-Mur2Ac(oyl-L-Ala-gamma-D-Glu-L-Lys-D-Ala-D-Ala)](n+1)-di-trans,octa-cis-undecaprenyl diphosphate + di-trans,octa-cis-undecaprenyl diphosphate + H(+). It participates in cell wall biogenesis; peptidoglycan biosynthesis. Functionally, peptidoglycan polymerase that catalyzes glycan chain elongation from lipid-linked precursors. This chain is Biosynthetic peptidoglycan transglycosylase, found in Xanthomonas campestris pv. campestris (strain 8004).